The following is a 443-amino-acid chain: Tubulin beta chain (443 aa).

Residues Gln-11, Glu-69, Ser-138, Gly-142, Thr-143, Gly-144, Asn-204, and Asn-226 each contribute to the GTP site. Mg(2+) is bound at residue Glu-69. Residues 424 to 443 (QYQDATAEEEGEFEEEEGEN) form a disordered region. The span at 429–443 (TAEEEGEFEEEEGEN) shows a compositional bias: acidic residues.

Belongs to the tubulin family. As to quaternary structure, dimer of alpha and beta chains. A typical microtubule is a hollow water-filled tube with an outer diameter of 25 nm and an inner diameter of 15 nM. Alpha-beta heterodimers associate head-to-tail to form protofilaments running lengthwise along the microtubule wall with the beta-tubulin subunit facing the microtubule plus end conferring a structural polarity. Microtubules usually have 13 protofilaments but different protofilament numbers can be found in some organisms and specialized cells. The cofactor is Mg(2+).

The protein resides in the cytoplasm. The protein localises to the cytoskeleton. Functionally, tubulin is the major constituent of microtubules, a cylinder consisting of laterally associated linear protofilaments composed of alpha- and beta-tubulin heterodimers. Microtubules grow by the addition of GTP-tubulin dimers to the microtubule end, where a stabilizing cap forms. Below the cap, tubulin dimers are in GDP-bound state, owing to GTPase activity of alpha-tubulin. This chain is Tubulin beta chain (BETA-TT1), found in Tetrahymena pyriformis.